A 259-amino-acid chain; its full sequence is Global transcriptional regulator CodY (259 aa).

A GAF domain region spans residues 1 to 155 (MNLLEKTRKI…GATVVGMEIL (155 aa)). Positions 203–222 (ASKIADRVGITRSVIVNALR) form a DNA-binding region, H-T-H motif. Serine 215 carries the phosphoserine modification.

It belongs to the CodY family.

The protein localises to the cytoplasm. Its function is as follows. DNA-binding global transcriptional regulator which is involved in the adaptive response to starvation and acts by directly or indirectly controlling the expression of numerous genes in response to nutrient availability. During rapid exponential growth, CodY is highly active and represses genes whose products allow adaptation to nutrient depletion. This chain is Global transcriptional regulator CodY, found in Geobacillus thermodenitrificans (strain NG80-2).